The sequence spans 202 residues: FMN-dependent NADH:quinone oxidoreductase (202 aa).

FMN contacts are provided by residues serine 10 and 95 to 98; that span reads MYNF.

This sequence belongs to the azoreductase type 1 family. Homodimer. FMN serves as cofactor.

The catalysed reaction is 2 a quinone + NADH + H(+) = 2 a 1,4-benzosemiquinone + NAD(+). It carries out the reaction N,N-dimethyl-1,4-phenylenediamine + anthranilate + 2 NAD(+) = 2-(4-dimethylaminophenyl)diazenylbenzoate + 2 NADH + 2 H(+). In terms of biological role, quinone reductase that provides resistance to thiol-specific stress caused by electrophilic quinones. Its function is as follows. Also exhibits azoreductase activity. Catalyzes the reductive cleavage of the azo bond in aromatic azo compounds to the corresponding amines. The sequence is that of FMN-dependent NADH:quinone oxidoreductase from Pseudoalteromonas atlantica (strain T6c / ATCC BAA-1087).